The sequence spans 601 residues: Replication protein A 70 kDa DNA-binding subunit (601 aa).

The disordered stretch occupies residues 107–172 (MPGKIGDPTP…NTPGGSSKVV (66 aa)). The segment covering 124 to 135 (APSTAPAPTARP) has biased composition (low complexity). Over residues 137–153 (QPQNGSDGSTYRPSAQS) the composition is skewed to polar residues. Positions 184 to 268 (WTIRARVTNK…LKNDYEMTLN (85 aa)) form a DNA-binding region, OB. At S370 the chain carries Phosphoserine. The segment at 466-488 (CPSKDCNKKVVDQQNGMFRCEKC) adopts a C4-type zinc-finger fold.

Belongs to the replication factor A protein 1 family. In terms of assembly, component of the heterotrimeric canonical replication protein A complex (RPA).

Its subcellular location is the nucleus. It is found in the PML body. Functionally, as part of the heterotrimeric replication protein A complex (RPA/RP-A), binds and stabilizes single-stranded DNA intermediates, that form during DNA replication or upon DNA stress. It prevents their reannealing and in parallel, recruits and activates different proteins and complexes involved in DNA metabolism. Thereby, it plays an essential role both in DNA replication and the cellular response to DNA damage. The protein is Replication protein A 70 kDa DNA-binding subunit (rpa1) of Danio rerio (Zebrafish).